The chain runs to 307 residues: Leucine-rich repeat-containing protein 25 (307 aa).

Residues 1 to 20 (MGGPLMWALLLPLLLHQAGS) form the signal peptide. Over 21–168 (QTSSCSVLSG…SCPSGLTKIA (148 aa)) the chain is Extracellular. 2 N-linked (GlcNAc...) asparagine glycosylation sites follow: Asn44 and Asn56. 2 LRR repeats span residues 63 to 86 (SVQL…RDLE) and 87 to 110 (QLQL…XXGC). N-linked (GlcNAc...) asparagine glycosylation is found at Asn95, Asn132, and Asn151. The helical transmembrane segment at 169–189 (IGALAASGSLLLVLAIAGPVL) threads the bilayer. Residues 190–307 (AWRFCRHRMD…DDEEYVVPGR (118 aa)) lie on the Cytoplasmic side of the membrane. The segment at 205 to 249 (TWASQDGSRSGSGRQPRYSSQGRRPKSPANTPPRSSTPDYENVFV) is disordered. Positions 211–226 (GSRSGSGRQPRYSSQG) are enriched in low complexity. Residues 232-243 (PANTPPRSSTPD) show a composition bias toward polar residues. Tyr286 carries the phosphotyrosine modification.

Interacts with RIGI. Interacts with SQSTM1. Interacts with p65/RELA; this interaction promotes the degradation of RELA through autophagy.

It localises to the membrane. Its subcellular location is the cytoplasm. Its function is as follows. Plays a role in the inhibition of RLR-mediated type I interferon signaling pathway by targeting RIGI for autophagic degradation. Interacts specifically with ISG15-associated RIGI to promote interaction between RIGI and the autophagic cargo receptor p62/SQSTM1 to mediate RIGI degradation via selective autophagy. Plays also a role in the inhibition of NF-kappa-B signaling pathway and inflammatory response by promoting the degradation of p65/RELA. The chain is Leucine-rich repeat-containing protein 25 (LRRC25) from Bos taurus (Bovine).